A 294-amino-acid chain; its full sequence is 2-methoxy-6-polyprenyl-1,4-benzoquinol methylase, mitochondrial (294 aa).

Residues M1–L10 constitute a mitochondrion transit peptide. S-adenosyl-L-methionine contacts are provided by residues T100, D136, and D166–A167.

The protein belongs to the class I-like SAM-binding methyltransferase superfamily. MenG/UbiE family. As to quaternary structure, component of a multi-subunit COQ enzyme complex.

It localises to the mitochondrion inner membrane. It carries out the reaction a 2-methoxy-6-(all-trans-polyprenyl)benzene-1,4-diol + S-adenosyl-L-methionine = a 5-methoxy-2-methyl-3-(all-trans-polyprenyl)benzene-1,4-diol + S-adenosyl-L-homocysteine + H(+). Its pathway is cofactor biosynthesis; ubiquinone biosynthesis. In terms of biological role, methyltransferase required for the conversion of 2-polyprenyl-6-methoxy-1,4-benzoquinol (DDMQH2) to 2-polyprenyl-3-methyl-6-methoxy-1,4-benzoquinol (DMQH2). The polypeptide is 2-methoxy-6-polyprenyl-1,4-benzoquinol methylase, mitochondrial (Oryza sativa subsp. japonica (Rice)).